The chain runs to 443 residues: Nuclear hormone receptor family member nhr-60 (443 aa).

Residues 1–20 (MIQSSSSISQDSLDLPSILS) are compositionally biased toward low complexity. The tract at residues 1 to 40 (MIQSSSSISQDSLDLPSILSTFSADEPEDEPSPTAVKSTK) is disordered. The segment at residues 44 to 121 (PTECLICGNS…VGMNPLAMEV (78 aa)) is a DNA-binding region (nuclear receptor). 2 NR C4-type zinc fingers span residues 47-67 (CLIC…CNGC) and 83-104 (CKAK…CRAC). Positions 196 to 439 (NEFSGLEYLL…KDLVMRVIED (244 aa)) constitute an NR LBD domain. A disordered region spans residues 225–249 (LRRDQLGPPRLPKPPSPGKPRDSQH). Residues 233–242 (PRLPKPPSPG) are compositionally biased toward pro residues.

This sequence belongs to the nuclear hormone receptor family.

The protein localises to the nucleus. Orphan nuclear receptor (Potential). Required for embryonic and larval morphogenesis and probably for seam cell positioning and migration. The protein is Nuclear hormone receptor family member nhr-60 of Caenorhabditis elegans.